Consider the following 878-residue polypeptide: Lon protease 2 (878 aa).

The region spanning 85–281 is the Lon N-terminal domain; it reads LYLLPVKERP…KVLSLFKHEI (197 aa). 434–441 provides a ligand contact to ATP; the sequence is GPPGVGKT. Residues 668 to 850 form the Lon proteolytic domain; sequence NQQMGTVTGL…DDVAKLTFHI (183 aa). Catalysis depends on residues S756 and K799.

This sequence belongs to the peptidase S16 family. Homohexamer. Organized in a ring with a central cavity.

Its subcellular location is the cytoplasm. It catalyses the reaction Hydrolysis of proteins in presence of ATP.. Its function is as follows. ATP-dependent serine protease that mediates the selective degradation of mutant and abnormal proteins as well as certain short-lived regulatory proteins. Required for cellular homeostasis and for survival from DNA damage and developmental changes induced by stress. Degrades polypeptides processively to yield small peptide fragments that are 5 to 10 amino acids long. Binds to DNA in a double-stranded, site-specific manner. The protein is Lon protease 2 of Hydrogenovibrio crunogenus (strain DSM 25203 / XCL-2) (Thiomicrospira crunogena).